A 584-amino-acid chain; its full sequence is MGPTTRARFVHNRRRRRRRGPYAAPDDDDEEEDQQEASSSSSSSDEGEEDAEEEGSGEVDDDDGEAAEPSGKEEEVSPVAAAARSGRKASITISLKKVCKVCKSTGHEAGFKGAVYIDCPRKPCFLCKMPGGHTTLTCPHRVAMEHGVIPASRRNTNTSLDYVFQSQVKGKIPMVKPQFLIPNQLECGNIKFHQRRVTCLEFHPTKNNVLLSGDKKGLLGVWDYVKLHEKITYDSVHSCILNSMKFDTTNDGLLYTASSDGTISSTDLDTGIGSSLLNLNPNGWNGPSTWRMIYGMDFNSDKGLLLVADSFGFLHLLDRRLKARIGDPILIHKKGSKVTSLHCNPAQPEVLLSSGNDHYARIWDTRKLEPNSAFVSLAHGRVVNSGYFSPQSGNKILTTCQDNRIRVWDYIFGNLESPSREIVHSHDFNRHLTPFKAEWDPKDHTETVAVIGRYISENYNGIALHPIDFIDTSTGKLLAEVMDPDITTISPVNKLHPRDDILASGSSRSIFIWKPKTESDATEERNREKAKEFVYGSGSRKKSNGKHENSSDDDSDGSCDGKKKKKAKKTRFTHTIKGKGKSKV.

The tract at residues 1–87 is disordered; that stretch reads MGPTTRARFV…PVAAAARSGR (87 aa). A compositionally biased stretch (basic residues) spans 8 to 20; sequence RFVHNRRRRRRRG. 2 stretches are compositionally biased toward acidic residues: residues 25-35 and 45-66; these read PDDDDEEEDQQ and DEGE…DGEA. A CCHC-type zinc finger spans residues 122–140; sequence KPCFLCKMPGGHTTLTCPH. 7 WD repeats span residues 192–232, 236–278, 288–327, 333–373, 378–418, 438–481, and 484–523; these read FHQR…EKIT, VHSC…SLLN, STWR…RIGD, KKGS…PNSA, AHGR…LESP, EWDP…LAEV, and PDIT…DATE. Residues 351–366 carry the DWD box motif; the sequence is LLSSGNDHYARIWDTR. A compositionally biased stretch (basic and acidic residues) spans 517–532; the sequence is TESDATEERNREKAKE. A disordered region spans residues 517-584; the sequence is TESDATEERN…TIKGKGKSKV (68 aa). Residues 562-584 are compositionally biased toward basic residues; sequence KKKKKAKKTRFTHTIKGKGKSKV.

This sequence belongs to the WD repeat DDB2/WDR76 family. As to quaternary structure, component of the UV-DDB complex, which is composed of DDB1 and DDB2. In terms of tissue distribution, expressed in proliferating tissues such as shoot apical meristem (SAM), root tips and young leaves. Not detected in mature leaves.

The protein resides in the nucleus. Its function is as follows. Required for DNA repair. Binds to DDB1 to form the UV-damaged DNA-binding protein complex (the UV-DDB complex). The UV-DDB complex may recognize UV-induced DNA damage and recruit proteins of the nucleotide excision repair pathway (the NER pathway) to initiate DNA repair. May function as the substrate recognition module for a DCX (DDB1-CUL4-X-box) E3 ubiquitin-protein ligase complex. The protein is DNA damage-binding protein 2 of Oryza sativa subsp. japonica (Rice).